The following is a 506-amino-acid chain: ATP synthase subunit alpha, chloroplastic (506 aa).

An ATP-binding site is contributed by 170–177; sequence GDRQTGKT.

Belongs to the ATPase alpha/beta chains family. In terms of assembly, F-type ATPases have 2 components, CF(1) - the catalytic core - and CF(0) - the membrane proton channel. CF(1) has five subunits: alpha(3), beta(3), gamma(1), delta(1), epsilon(1). CF(0) has four main subunits: a, b, b' and c.

The protein localises to the plastid. It is found in the chloroplast thylakoid membrane. It catalyses the reaction ATP + H2O + 4 H(+)(in) = ADP + phosphate + 5 H(+)(out). Functionally, produces ATP from ADP in the presence of a proton gradient across the membrane. The alpha chain is a regulatory subunit. The sequence is that of ATP synthase subunit alpha, chloroplastic from Chlorella vulgaris (Green alga).